The sequence spans 1092 residues: Probable cellulose synthase A catalytic subunit 6 [UDP-forming] (1092 aa).

At 1–280 (MEASAGLVAG…SSSRINPYRM (280 aa)) the chain is on the cytoplasmic side. Residues C42, C45, C61, C64, C69, C72, C84, and C87 each contribute to the Zn(2+) site. The RING-type; degenerate zinc-finger motif lies at 42–88 (CQICGDDVGEGPDGEPFVACNECAFPVCRNCYDYERREGSQACPQCK). The disordered stretch occupies residues 100–123 (VAGDEEEDGVDDLEGEFGLDGRED). Residues 103–116 (DEEEDGVDDLEGEF) are compositionally biased toward acidic residues. Residues 281-301 (IIIIRLVVLGFFFHYRVMHPV) form a helical membrane-spanning segment. The Extracellular segment spans residues 302–303 (ND). Residues 304 to 324 (AFALWLISVICEIWFAMSWIL) form a helical membrane-spanning segment. The Cytoplasmic portion of the chain corresponds to 325 to 868 (DQFPKWLPIE…FLERFSYINS (544 aa)). Residues S363, K369, E370, and D399 each coordinate UDP-alpha-D-glucose. Residue D399 is part of the active site. A coiled-coil region spans residues 453-480 (VRERRAMKRDYEEFKVRINALVAKAQKV). UDP-alpha-D-glucose is bound at residue K540. Mn(2+) is bound by residues K541 and D565. The active site involves D792. Residues 869–889 (IVYPWTSIPLLAYCTLPAICL) form a helical membrane-spanning segment. At 890-901 (LTGKFITPELTN) the chain is on the extracellular side. The chain crosses the membrane as a helical span at residues 902–922 (VASLWFMSLFICIFVTGILEM). Residues 923 to 937 (RWSGVAIDDWWRNEQ) lie on the Cytoplasmic side of the membrane. Residues 938–958 (FWVIGGVSSHLFAVFQGLLKV) traverse the membrane as a helical segment. Residues 959-987 (LAGVDTSFTVTSKAGDDEEFSELYTFKWT) lie on the Extracellular side of the membrane. The helical transmembrane segment at 988 to 1008 (TLLIPPTTLLLLNFIGVVAGV) threads the bilayer. Residues 1009–1019 (SNAINNGYESW) are Cytoplasmic-facing. Residues 1020 to 1040 (GPLFGKLFFAFWVIVHLYPFL) traverse the membrane as a helical segment. The Extracellular portion of the chain corresponds to 1041–1049 (KGLVGRQNR). A helical transmembrane segment spans residues 1050–1070 (TPTIVIVWSILLASIFSLLWV). At 1071–1092 (RIDPFLAKNNGPLLEECGLDCN) the chain is on the cytoplasmic side.

Belongs to the glycosyltransferase 2 family. Plant cellulose synthase subfamily. Mn(2+) is required as a cofactor. Zn(2+) serves as cofactor.

It localises to the cell membrane. It catalyses the reaction [(1-&gt;4)-beta-D-glucosyl](n) + UDP-alpha-D-glucose = [(1-&gt;4)-beta-D-glucosyl](n+1) + UDP + H(+). The protein operates within glycan metabolism; plant cellulose biosynthesis. Probable catalytic subunit of cellulose synthase terminal complexes ('rosettes'), required for beta-1,4-glucan microfibril crystallization, a major mechanism of the cell wall formation. The sequence is that of Probable cellulose synthase A catalytic subunit 6 [UDP-forming] (CESA6) from Oryza sativa subsp. japonica (Rice).